A 432-amino-acid chain; its full sequence is EF-hand calcium-binding domain-containing protein 3 (432 aa).

EF-hand domains follow at residues Ala45–Asn80 and Leu81–Phe116. Residues Asp94, Asp96, Asp98, Lys100, and Asp105 each contribute to the Ca(2+) site. Position 273 is a phosphotyrosine (Tyr273). The disordered stretch occupies residues Ser394 to Gln432. The span at Met395–Phe411 shows a compositional bias: low complexity. Basic residues predominate over residues Arg420 to Gln432.

The sequence is that of EF-hand calcium-binding domain-containing protein 3 (Efcab3) from Mus musculus (Mouse).